The chain runs to 263 residues: Large ribosomal subunit protein uL29m (263 aa).

Disordered regions lie at residues 51-92 (ARVT…EELP) and 208-263 (PEID…APRV). Positions 53 to 66 (VTRDNSKQRGESAL) are enriched in basic and acidic residues. The segment covering 214-223 (NPENPYTPST) has biased composition (polar residues). Over residues 233 to 245 (GAEASETQSTTTE) the composition is skewed to low complexity. The segment covering 246–257 (IDPTTIPSSKSQ) has biased composition (polar residues).

Belongs to the universal ribosomal protein uL29 family. Component of the mitochondrial large ribosomal subunit (mt-LSU). Mature N.crassa 74S mitochondrial ribosomes consist of a small (37S) and a large (54S) subunit. The 37S small subunit contains a 16S ribosomal RNA (16S mt-rRNA) and 32 different proteins. The 54S large subunit contains a 23S rRNA (23S mt-rRNA) and 42 different proteins.

Its subcellular location is the mitochondrion. In terms of biological role, component of the mitochondrial ribosome (mitoribosome), a dedicated translation machinery responsible for the synthesis of mitochondrial genome-encoded proteins, including at least some of the essential transmembrane subunits of the mitochondrial respiratory chain. The mitoribosomes are attached to the mitochondrial inner membrane and translation products are cotranslationally integrated into the membrane. In Neurospora crassa (strain ATCC 24698 / 74-OR23-1A / CBS 708.71 / DSM 1257 / FGSC 987), this protein is Large ribosomal subunit protein uL29m (mrpl4).